The following is a 413-amino-acid chain: Inactive squalene synthase 2 (413 aa).

Gly-2 bears the N-acetylglycine mark. Transmembrane regions (helical) follow at residues 283-303 (AIFQ…ALCY) and 390-410 (AIFV…LKAN).

It belongs to the phytoene/squalene synthase family. Requires Mg(2+) as cofactor. Mn(2+) is required as a cofactor. As to expression, mostly expressed in hypocotyls, leaves and cotyledons, and, to a lower extent, in stems.

It is found in the endoplasmic reticulum membrane. The chain is Inactive squalene synthase 2 from Arabidopsis thaliana (Mouse-ear cress).